The primary structure comprises 282 residues: Small ribosomal subunit protein uS3 (282 aa).

The region spanning 43 to 111 is the KH type-2 domain; that stretch reads IRRLMSKGME…QVQLNILEVK (69 aa). Residues 217–282 are disordered; sequence AQSQAAAPRA…IGKGSNGTEA (66 aa). Over residues 228–240 the composition is skewed to basic and acidic residues; that stretch reads RRNERGDRPDRGA. Residues 256-269 show a composition bias toward low complexity; it reads AVATGSAPTGTAAT.

The protein belongs to the universal ribosomal protein uS3 family. In terms of assembly, part of the 30S ribosomal subunit. Forms a tight complex with proteins S10 and S14.

Its function is as follows. Binds the lower part of the 30S subunit head. Binds mRNA in the 70S ribosome, positioning it for translation. This is Small ribosomal subunit protein uS3 from Kineococcus radiotolerans (strain ATCC BAA-149 / DSM 14245 / SRS30216).